The sequence spans 364 residues: Isopentenyl-diphosphate delta-isomerase (364 aa).

Residues methionine 1–leucine 13 show a composition bias toward basic and acidic residues. Residues methionine 1 to arginine 24 form a disordered region. Arginine 6–lysine 7 serves as a coordination point for substrate. FMN-binding positions include alanine 64–threonine 66, serine 94, and asparagine 123. Serine 94–histidine 96 contacts substrate. Glutamine 153 provides a ligand contact to substrate. Glutamate 154 serves as a coordination point for Mg(2+). Residues lysine 185, serine 210, threonine 215, glycine 259–arginine 261, and serine 280–glycine 281 each bind FMN.

This sequence belongs to the IPP isomerase type 2 family. Homooctamer. Dimer of tetramers. FMN is required as a cofactor. The cofactor is NADPH. Requires Mg(2+) as cofactor.

It is found in the cytoplasm. It carries out the reaction isopentenyl diphosphate = dimethylallyl diphosphate. Involved in the biosynthesis of isoprenoids. Catalyzes the 1,3-allylic rearrangement of the homoallylic substrate isopentenyl (IPP) to its allylic isomer, dimethylallyl diphosphate (DMAPP). This chain is Isopentenyl-diphosphate delta-isomerase, found in Kitasatospora griseola (Streptomyces griseolosporeus).